We begin with the raw amino-acid sequence, 632 residues long: Fem-3 mRNA-binding factor 2 (632 aa).

The segment covering 1 to 11 (MDQSKMRRTNQ) has biased composition (basic residues). Residues 1–37 (MDQSKMRRTNQFRKTSQKPPSTGIDSYPTPAQSPMAQ) are disordered. The segment covering 12–35 (FRKTSQKPPSTGIDSYPTPAQSPM) has biased composition (polar residues). Residues 162–566 (TRSNNVLPTW…KMIETLANLR (405 aa)) form the PUM-HD domain. Pumilio repeat units follow at residues 187-225 (EVLD…QLFE), 226-264 (QVIG…GYTK), 271-307 (NFIS…KLVQ), 308-332 (ALPR…QKVV), 345-384 (DFVA…DLTS), 400-436 (SVTN…CIIE), 438-473 (CLMR…EMMD), and 484-521 (DTGK…RQTK). A disordered region spans residues 609–632 (MLEPRSNKSSVSVKFSSSGSHGDD). Residues 615-632 (NKSSVSVKFSSSGSHGDD) show a composition bias toward low complexity.

In terms of assembly, interacts (via C-terminus) with gld-3 isoform A in an RNA-independent manner. Interacts with dlc-1, and is required for the localization of fbf-2 to P granules. Interacts (via RNA-binding domain) with lst-1, probably displaces bound auto-inhibitory C-terminal tail and alters its RNA-binding affinity. As to expression, expressed specifically in the germline (at protein level).

It localises to the cytoplasm. The protein localises to the cytoplasmic granule. RNA-binding protein that binds to the consensus sequence 5'-UGUGCCAUA-3' in mRNA 3'-UTRs. Involved in the control of stem cells and sex determination in the C.elegans hermaphrodite germline. May also play a role in the hermaphrodite germline proliferation and oogenesis. By binding to the 3'-UTR, represses phosphatase lip-1 expression in the distal part of the germline mitotic zone. Binds specifically to the regulatory region of fem-3 3'-UTR and mediates the sperm/oocyte switch. Negatively regulates gld-3 expression possibly by directly binding to two sites within the gld-3 isoform b 3'-UTR. Suppresses germline tumor formation by preventing the dedifferentiation of secondary spermatocytes. C-terminal disordered region probably auto-inhibits RNA binding; auto-inhibition may be reversed by interaction with lst-1. In Caenorhabditis elegans, this protein is Fem-3 mRNA-binding factor 2.